The chain runs to 403 residues: Phosphoglycerate kinase (403 aa).

Substrate-binding positions include 24–26 (DLN), Arg-39, 62–65 (HLGR), Arg-121, and Arg-161. ATP-binding positions include Lys-211, Gly-299, Glu-330, and 359-362 (GGDS).

The protein belongs to the phosphoglycerate kinase family. As to quaternary structure, monomer.

Its subcellular location is the cytoplasm. The enzyme catalyses (2R)-3-phosphoglycerate + ATP = (2R)-3-phospho-glyceroyl phosphate + ADP. The protein operates within carbohydrate degradation; glycolysis; pyruvate from D-glyceraldehyde 3-phosphate: step 2/5. The sequence is that of Phosphoglycerate kinase from Rhodococcus erythropolis (strain PR4 / NBRC 100887).